Here is an 813-residue protein sequence, read N- to C-terminus: Leucine--tRNA ligase (813 aa).

A 'HIGH' region motif is present at residues 40 to 51 (SYPSGSKLHAGH). The 'KMSKS' region motif lies at 572–576 (KMSKS). Position 575 (Lys575) interacts with ATP.

This sequence belongs to the class-I aminoacyl-tRNA synthetase family.

Its subcellular location is the cytoplasm. It carries out the reaction tRNA(Leu) + L-leucine + ATP = L-leucyl-tRNA(Leu) + AMP + diphosphate. This is Leucine--tRNA ligase from Clostridium botulinum (strain ATCC 19397 / Type A).